A 152-amino-acid chain; its full sequence is Transcriptional regulator MraZ (152 aa).

2 SpoVT-AbrB domains span residues 5–52 and 81–124; these read ATLV…PLPE and ASEC…DETT.

It belongs to the MraZ family. As to quaternary structure, forms oligomers.

The protein resides in the cytoplasm. Its subcellular location is the nucleoid. In terms of biological role, negatively regulates its own expression and that of the subsequent genes in the proximal part of the division and cell wall (dcw) gene cluster. Acts by binding directly to DNA. May also regulate the expression of genes outside the dcw cluster. This Salmonella gallinarum (strain 287/91 / NCTC 13346) protein is Transcriptional regulator MraZ.